Reading from the N-terminus, the 508-residue chain is UBX domain-containing protein 4 (508 aa).

The tract at residues 1–200 is interaction with UBQLN1; that stretch reads MLWFQGAIPA…PTEDLTVRVE (200 aa). Topologically, residues 1-413 are cytoplasmic; that stretch reads MLWFQGAIPA…VHSSSGDFWT (413 aa). Residues 117 to 199 are disordered; the sequence is GEASLANGSQ…RPTEDLTVRV (83 aa). Over residues 122 to 190 the composition is skewed to polar residues; that stretch reads ANGSQSEGSV…QEPSGCSNQR (69 aa). The UBX domain maps to 315 to 393; it reads ERSTVARIQF…ELAPSASVVL (79 aa). The stretch at 414 to 434 is an intramembrane region; the sequence is LLGTVLYPFLAIWRLISNFLF. Residues 435-508 lie on the Cytoplasmic side of the membrane; sequence SNPPPAQTSV…TWNGNSTQQM (74 aa). Positions 450–459 are enriched in polar residues; sequence ETSNLASSSN. Positions 450–508 are disordered; it reads ETSNLASSSNSEKREPVRKRVLEKRGEDFKKEGKIYRLRTQDDGEDENNTWNGNSTQQM. A compositionally biased stretch (basic and acidic residues) spans 460 to 491; the sequence is SEKREPVRKRVLEKRGEDFKKEGKIYRLRTQD. Thr489 carries the post-translational modification Phosphothreonine. The segment covering 498 to 508 has biased composition (polar residues); that stretch reads NTWNGNSTQQM.

Directly interacts with VCP. Interacts with UBQLN1. Forms a complex with VCP and UBQLN1.

It is found in the endoplasmic reticulum membrane. It localises to the nucleus envelope. In terms of biological role, involved in endoplasmic reticulum-associated protein degradation (ERAD). Acts as a platform to recruit both UBQLN1 and VCP to the ER during ERAD. The sequence is that of UBX domain-containing protein 4 (UBXN4) from Bos taurus (Bovine).